A 162-amino-acid chain; its full sequence is MTNGNGANPEAAPPPQLNVLAQYIKDLSFENPNAPQSLAPQGQPPQINIQINVGANALADTEFEVTLTIEGKAESGTQVMFSFELVYGGVFRLVNVPQEHLSPMLLIECPRLLFPFAREIVANSVRDGGFPPLMLDPVDFVSLYRQNMERQAAAQGAQIRPS.

This sequence belongs to the SecB family. As to quaternary structure, homotetramer, a dimer of dimers. One homotetramer interacts with 1 SecA dimer.

It is found in the cytoplasm. One of the proteins required for the normal export of preproteins out of the cell cytoplasm. It is a molecular chaperone that binds to a subset of precursor proteins, maintaining them in a translocation-competent state. It also specifically binds to its receptor SecA. In Bradyrhizobium sp. (strain BTAi1 / ATCC BAA-1182), this protein is Protein-export protein SecB.